The sequence spans 173 residues: Large ribosomal subunit protein uL10 (173 aa).

This sequence belongs to the universal ribosomal protein uL10 family. In terms of assembly, part of the ribosomal stalk of the 50S ribosomal subunit. The N-terminus interacts with L11 and the large rRNA to form the base of the stalk. The C-terminus forms an elongated spine to which L12 dimers bind in a sequential fashion forming a multimeric L10(L12)X complex.

Forms part of the ribosomal stalk, playing a central role in the interaction of the ribosome with GTP-bound translation factors. This chain is Large ribosomal subunit protein uL10, found in Acidithiobacillus ferrooxidans (strain ATCC 23270 / DSM 14882 / CIP 104768 / NCIMB 8455) (Ferrobacillus ferrooxidans (strain ATCC 23270)).